The sequence spans 333 residues: Tetraacyldisaccharide 4'-kinase (333 aa).

55–62 (TAGGNGKT) is a binding site for ATP.

Belongs to the LpxK family.

The enzyme catalyses a lipid A disaccharide + ATP = a lipid IVA + ADP + H(+). It functions in the pathway glycolipid biosynthesis; lipid IV(A) biosynthesis; lipid IV(A) from (3R)-3-hydroxytetradecanoyl-[acyl-carrier-protein] and UDP-N-acetyl-alpha-D-glucosamine: step 6/6. Functionally, transfers the gamma-phosphate of ATP to the 4'-position of a tetraacyldisaccharide 1-phosphate intermediate (termed DS-1-P) to form tetraacyldisaccharide 1,4'-bis-phosphate (lipid IVA). The protein is Tetraacyldisaccharide 4'-kinase of Pectobacterium carotovorum subsp. carotovorum (strain PC1).